The sequence spans 391 residues: Phosphoglycerate kinase (391 aa).

Substrate contacts are provided by residues 21–23, arginine 36, 59–62, arginine 113, and arginine 146; these read DLN and HLGR. ATP is bound by residues lysine 197, glutamate 319, and 345-348; that span reads GGDT.

Belongs to the phosphoglycerate kinase family. As to quaternary structure, monomer.

It is found in the cytoplasm. The catalysed reaction is (2R)-3-phosphoglycerate + ATP = (2R)-3-phospho-glyceroyl phosphate + ADP. Its pathway is carbohydrate degradation; glycolysis; pyruvate from D-glyceraldehyde 3-phosphate: step 2/5. The protein is Phosphoglycerate kinase of Shewanella halifaxensis (strain HAW-EB4).